The primary structure comprises 104 residues: Large ribosomal subunit protein uL24 (104 aa).

It belongs to the universal ribosomal protein uL24 family. As to quaternary structure, part of the 50S ribosomal subunit. In terms of processing, a methylated and unmethylated form are thought to exist.

Its function is as follows. One of two assembly initiator proteins, it binds directly to the 5'-end of the 23S rRNA, where it nucleates assembly of the 50S subunit. In terms of biological role, one of the proteins that surrounds the polypeptide exit tunnel on the outside of the subunit. The protein is Large ribosomal subunit protein uL24 of Rhodopseudomonas palustris (strain ATCC BAA-98 / CGA009).